Here is a 639-residue protein sequence, read N- to C-terminus: Methyl-accepting chemotaxis protein McpS (639 aa).

Residues 1 to 13 (MNSWFANISVNLK) are Cytoplasmic-facing. A helical transmembrane segment spans residues 14-34 (LGLGFGLVLVLTGLLALTGWT). Residues 35–288 (SLGSLIDRSN…RDIESTQARS (254 aa)) lie on the Periplasmic side of the membrane. In terms of domain architecture, HBM spans 41–283 (DRSNWMGDIG…IQLERRDIES (243 aa)). Residue 60-65 (RIARLQ) participates in (S)-malate binding. Residue 60-65 (RIARLQ) participates in succinate binding. Residues aspartate 138, arginine 183, arginine 187, and tyrosine 236 each coordinate acetate. A coiled-coil region spans residues 191–245 (AENSSANEQAALRQLDAALADTDNLKRQLPSEDARLQQFENAVLAYRDAVRQFRD). (S)-malate-binding residues include arginine 254 and threonine 258. Arginine 254 contacts succinate. A helical transmembrane segment spans residues 289–309 (LQAIATLLALLVGVLAAVLIT). The HAMP domain occupies 310–362 (RQITRPLQDTLVAVEKIASGDLTQHMRVTRRDELGVLQQGIARMGTTLRELIS). At 310 to 639 (RQITRPLQDT…LQTLVSQFRV (330 aa)) the chain is on the cytoplasmic side. Residues 367-603 (GVTQIASAAE…EISRSILNVR (237 aa)) enclose the Methyl-accepting transducer domain.

This sequence belongs to the methyl-accepting chemotaxis (MCP) protein family. Homodimer. Exists as a mixture of monomers and dimers in solution. Ligand binding stabilizes the dimeric form. Methylated by CheR2.

It is found in the cell membrane. Its activity is regulated as follows. Binding of citrate to the ligand-binding domain reduces the chemotaxis towards the strong attractants such as malate and succinate. However, in physiologically relevant niches, citrate is mostly complexed with magnesium or calcium ions, and does not bind McpS. Chemotactic-signal transducers respond to changes in the concentration of attractants and repellents in the environment, transduce a signal from the outside to the inside of the cell, and facilitate sensory adaptation through the variation of the level of methylation. McpS is a specific chemoreceptor for 6 tricarboxylic acid (TCA) cycle intermediates (succinate, fumarate, malate, oxaloacetate, citrate and isocitrate), butyrate and acetate. Malate, succinate, fumarate and oxaloacetate cause the strongest chemotactic response. This is Methyl-accepting chemotaxis protein McpS (mcpS) from Pseudomonas putida (strain ATCC 47054 / DSM 6125 / CFBP 8728 / NCIMB 11950 / KT2440).